Consider the following 629-residue polypeptide: tRNA uridine 5-carboxymethylaminomethyl modification enzyme MnmG (629 aa).

Residues 14–19, Val-126, and Ser-181 each bind FAD; that span reads GAGHAG. An NAD(+)-binding site is contributed by 273-287; it reads GPRYCPSIEDKVVRF. Gln-370 contacts FAD.

Belongs to the MnmG family. In terms of assembly, homodimer. Heterotetramer of two MnmE and two MnmG subunits. Requires FAD as cofactor.

The protein localises to the cytoplasm. Functionally, NAD-binding protein involved in the addition of a carboxymethylaminomethyl (cmnm) group at the wobble position (U34) of certain tRNAs, forming tRNA-cmnm(5)s(2)U34. In Bacillus cereus (strain ATCC 14579 / DSM 31 / CCUG 7414 / JCM 2152 / NBRC 15305 / NCIMB 9373 / NCTC 2599 / NRRL B-3711), this protein is tRNA uridine 5-carboxymethylaminomethyl modification enzyme MnmG.